The following is a 79-amino-acid chain: Dolichyl-diphosphooligosaccharide--protein glycosyltransferase subunit TMEM258 (79 aa).

The next 2 helical transmembrane spans lie at 17-37 (VFPH…AWFF) and 55-75 (LISL…LLWV).

This sequence belongs to the OST5 family. Component of the oligosaccharyltransferase (OST) complex.

It localises to the membrane. Its subcellular location is the endoplasmic reticulum. The protein localises to the cytoplasm. It participates in protein modification; protein glycosylation. Its function is as follows. Subunit of the oligosaccharyl transferase (OST) complex that catalyzes the initial transfer of a defined glycan (Glc(3)Man(9)GlcNAc(2) in eukaryotes) from the lipid carrier dolichol-pyrophosphate to an asparagine residue within an Asn-X-Ser/Thr consensus motif in nascent polypeptide chains, the first step in protein N-glycosylation. N-glycosylation occurs cotranslationally and the complex associates with the Sec61 complex at the channel-forming translocon complex that mediates protein translocation across the endoplasmic reticulum (ER). All subunits are required for a maximal enzyme activity. The protein is Dolichyl-diphosphooligosaccharide--protein glycosyltransferase subunit TMEM258 of Xenopus laevis (African clawed frog).